A 308-amino-acid chain; its full sequence is Transaldolase (308 aa).

The Schiff-base intermediate with substrate role is filled by lysine 125.

This sequence belongs to the transaldolase family. Type 1 subfamily. As to quaternary structure, homodimer.

The protein resides in the cytoplasm. It catalyses the reaction D-sedoheptulose 7-phosphate + D-glyceraldehyde 3-phosphate = D-erythrose 4-phosphate + beta-D-fructose 6-phosphate. It participates in carbohydrate degradation; pentose phosphate pathway; D-glyceraldehyde 3-phosphate and beta-D-fructose 6-phosphate from D-ribose 5-phosphate and D-xylulose 5-phosphate (non-oxidative stage): step 2/3. Functionally, transaldolase is important for the balance of metabolites in the pentose-phosphate pathway. The protein is Transaldolase of Pseudomonas entomophila (strain L48).